Reading from the N-terminus, the 768-residue chain is MSNLGKSTGSRKDTKMRIRAFPMTMDEKYVNSIWDLLKNAIQEIQRKNNSGLSFEELYRNAYTMVLHKHGEKLYTGLREVVTEHLINKVREDVLNSLNNNFLQTLNQAWNDHQTAMVMIRDILMYMDRVYVQQNNVENVYNLGLIIFRDQVVRYGCIRDHLRQTLLDMIARERKGEVVDRGAIRNACQMLMILGLEGRSVYEEDFEAPFLEMSAEFFQMESQKFLAENSASVYIKKVEARINEEIERVMHCLDKSTEEPIVKVVERELISKHMKTIVEMENSGLVHMLKNGKTEDLACMYKLFSRVPNGLKTMCECMSLYLREQGKALVSEEGEGKNPVDYIQGLLDLKSRFDRFLQESFSNDRLFKQTIAGDFEYFLNLNSRSPEYLSLFIDDKLKKGVKGLTEQEVESILDKAMVLFRFMQEKDVFERYYKQHLARRLLTNKSVSDDSEKNMISKLKTECGCQFTSKLEGMFRDMSISNTTMDEFRQHLQTTGVSLGGVDLTVRVLTTGYWPTQSATPKCNIPPAPRHAFEIFRRFYLAKHSGRQLTLQHHMGSADLNATFYGPVKKEDGSEVGVGGAQVTGSNTRKHILQVSTFQMTILMLFNNREKYTFEEIQQETDIPERELVRALQSLACGKPTQRVLTKEPKSKEIESGHMFTVNDQFTSKLHRVKIQTVAAKQGESDPERKETRQKVDDDRKHEIEAAIVRIMKSRKKMQHNVLVAEVTQQLKARFLPSPVVIKKRIEGLIEREYLARTPEDRKVYTYVA.

The segment at 677–698 (VAAKQGESDPERKETRQKVDDD) is disordered. Basic and acidic residues predominate over residues 682 to 698 (GESDPERKETRQKVDDD). One can recognise a Cullin neddylation domain in the interval 698–760 (DRKHEIEAAI…REYLARTPED (63 aa)). Residue Lys-712 forms a Glycyl lysine isopeptide (Lys-Gly) (interchain with G-Cter in NEDD8) linkage.

The protein belongs to the cullin family. Component of multiple BCR (BTB-CUL3-RBX1) E3 ubiquitin-protein ligase complexes formed of cul3, rbx1 and a variable BTB domain-containing protein acting as both, adapter to cullin and substrate recognition subunit. Interacts with btbd6. Neddylated. Attachment of NEDD8 is required for the E3 ubiquitin-protein ligase activity of the SCF-like complex.

It localises to the nucleus. The protein operates within protein modification; protein ubiquitination. In terms of biological role, probable core component of cullin-based SCF-like E3 ubiquitin-protein ligase complexes which mediate the ubiquitination and subsequent proteasomal degradation of target proteins. The E3 ubiquitin-protein ligase activity of the complex is dependent on the neddylation of the cullin subunit. Involved in ER-Golgi transport by regulating the size of COPII coats, thereby playing a key role in collagen export, which is required for embryonic stem (ES) cells division. May play a role in the regulation of mittotic entry via ubiquitination of aurka. This is Cullin-3 (cul3) from Xenopus tropicalis (Western clawed frog).